Reading from the N-terminus, the 266-residue chain is Glucosamine-6-phosphate deaminase (266 aa).

Aspartate 72 acts as the Proton acceptor; for enolization step in catalysis. Catalysis depends on aspartate 141, which acts as the For ring-opening step. Histidine 143 acts as the Proton acceptor; for ring-opening step in catalysis. The active-site For ring-opening step is glutamate 148.

It belongs to the glucosamine/galactosamine-6-phosphate isomerase family. NagB subfamily. As to quaternary structure, homohexamer; trimer of disulfide-linked dimers.

It catalyses the reaction alpha-D-glucosamine 6-phosphate + H2O = beta-D-fructose 6-phosphate + NH4(+). It functions in the pathway amino-sugar metabolism; N-acetylneuraminate degradation; D-fructose 6-phosphate from N-acetylneuraminate: step 5/5. Its activity is regulated as follows. Allosterically activated by N-acetylglucosamine 6-phosphate (GlcNAc6P). Catalyzes the reversible isomerization-deamination of glucosamine 6-phosphate (GlcN6P) to form fructose 6-phosphate (Fru6P) and ammonium ion. In Vibrio parahaemolyticus serotype O3:K6 (strain RIMD 2210633), this protein is Glucosamine-6-phosphate deaminase.